The primary structure comprises 143 residues: Large ribosomal subunit protein uL11 (143 aa).

This sequence belongs to the universal ribosomal protein uL11 family. As to quaternary structure, part of the ribosomal stalk of the 50S ribosomal subunit. Interacts with L10 and the large rRNA to form the base of the stalk. L10 forms an elongated spine to which L12 dimers bind in a sequential fashion forming a multimeric L10(L12)X complex. In terms of processing, one or more lysine residues are methylated.

Forms part of the ribosomal stalk which helps the ribosome interact with GTP-bound translation factors. In Sphingopyxis alaskensis (strain DSM 13593 / LMG 18877 / RB2256) (Sphingomonas alaskensis), this protein is Large ribosomal subunit protein uL11.